Here is a 201-residue protein sequence, read N- to C-terminus: 3-isopropylmalate dehydratase small subunit (201 aa).

It belongs to the LeuD family. LeuD type 1 subfamily. Heterodimer of LeuC and LeuD.

It catalyses the reaction (2R,3S)-3-isopropylmalate = (2S)-2-isopropylmalate. It participates in amino-acid biosynthesis; L-leucine biosynthesis; L-leucine from 3-methyl-2-oxobutanoate: step 2/4. Its function is as follows. Catalyzes the isomerization between 2-isopropylmalate and 3-isopropylmalate, via the formation of 2-isopropylmaleate. The protein is 3-isopropylmalate dehydratase small subunit of Cereibacter sphaeroides (strain ATCC 17029 / ATH 2.4.9) (Rhodobacter sphaeroides).